Here is a 79-residue protein sequence, read N- to C-terminus: Beta-defensin 130 (79 aa).

The signal sequence occupies residues methionine 1–threonine 22. Disulfide bonds link cysteine 38–cysteine 53 and cysteine 43–cysteine 60.

The protein belongs to the beta-defensin family.

It localises to the secreted. Antimicrobial host-defense peptide. The polypeptide is Beta-defensin 130 (Pan troglodytes (Chimpanzee)).